We begin with the raw amino-acid sequence, 372 residues long: Aminodeoxyfutalosine synthase (372 aa).

The Radical SAM core domain occupies 53 to 292 (HKTYFVHSIR…VARLYLDNFP (240 aa)). Residues cysteine 69, cysteine 73, and cysteine 76 each coordinate [4Fe-4S] cluster.

It belongs to the radical SAM superfamily. MqnE family. [4Fe-4S] cluster serves as cofactor.

It catalyses the reaction 3-[(1-carboxyvinyl)-oxy]benzoate + S-adenosyl-L-methionine + H2O = 6-amino-6-deoxyfutalosine + hydrogencarbonate + L-methionine + H(+). The protein operates within quinol/quinone metabolism; menaquinone biosynthesis. In terms of biological role, radical SAM enzyme that catalyzes the addition of the adenosyl radical to the double bond of 3-[(1-carboxyvinyl)oxy]benzoate, leading to aminodeoxyfutalosine (AFL), a key intermediate in the formation of menaquinone (MK, vitamin K2) from chorismate. The protein is Aminodeoxyfutalosine synthase of Thermus thermophilus (strain ATCC 27634 / DSM 579 / HB8).